Consider the following 1703-residue polypeptide: Stress response protein NST1 (1703 aa).

Disordered stretches follow at residues 1–91 (MAKS…AKDA), 243–288 (DQPL…PLPP), 347–484 (HALR…IWST), 566–724 (VSSG…GLGS), 759–807 (MHRE…EQRM), 843–1292 (LREL…LGAP), 1353–1407 (FSPM…IGPI), 1424–1465 (HTGA…DIID), 1516–1537 (SSFS…NGGG), 1558–1581 (ASTP…PWAR), 1595–1637 (EQPG…HHQL), and 1672–1703 (GAPG…GSHE). Residues 7–36 (PRSTPAARAAAVPPPRLAAAAQQQHHQQQP) show a composition bias toward low complexity. The segment covering 37–48 (PSTPPAPVPPTK) has biased composition (pro residues). Polar residues predominate over residues 57–66 (PPRSASPVSN). The segment covering 77-86 (AKKKKKKSKS) has biased composition (basic residues). Positions 253-273 (NTANNAHPTNVNGAYGQYSSS) are enriched in polar residues. The span at 274-288 (PNPPPTQPPVEPLPP) shows a compositional bias: pro residues. The segment covering 365–376 (SKNKKKKKKKKG) has biased composition (basic residues). The segment covering 384–393 (HGDDEAHEIE) has biased composition (basic and acidic residues). Over residues 396–409 (VPPPKPVPNHPPPS) the composition is skewed to pro residues. 2 stretches are compositionally biased toward low complexity: residues 410–419 (TNVSSVARNS) and 453–464 (SSNSGKRSVSSS). Residues 572–581 (IPPPPGPGPF) are compositionally biased toward pro residues. Over residues 614 to 650 (THTHTHAHTHTHTHTHTHTHTHAHQHPHPHPHGRKAS) the composition is skewed to basic residues. Acidic residues predominate over residues 657–690 (DGYDDDELDDDAEYDDDDDDADYDDEDEDDDVEL). The span at 691-703 (EKERAREDYDKRN) shows a compositional bias: basic and acidic residues. A coiled-coil region spans residues 748–1031 (LEMMEQLAER…AKQAAAAASR (284 aa)). A compositionally biased stretch (acidic residues) spans 771–802 (ASDDEDDVDGPDDVDDEDLDEEDEDEEDEILT). 3 stretches are compositionally biased toward basic and acidic residues: residues 853–866 (EKAR…ESQK), 874–896 (QREA…EAEV), and 904–1023 (RDAE…REAK). Composition is skewed to low complexity over residues 1024 to 1037 (QAAA…SAAQ) and 1111 to 1135 (AGGL…AVGS). Pro residues predominate over residues 1138-1148 (PAPPQGLPPRP). Positions 1158–1167 (SSSQTSSVSV) are enriched in low complexity. Residues 1200-1219 (LNAQSNVPMPSAKTPGSSIS) show a composition bias toward polar residues. Residues 1269–1291 (QNSGMFGSNGSMSSSLQSPSLGA) show a composition bias toward low complexity. A compositionally biased stretch (low complexity) spans 1431–1444 (GRSSSTTSGSGATS). Residues 1598-1619 (GGNGVGAGSNGGTPSGLGGIGG) show a composition bias toward gly residues.

Belongs to the NST1 family.

The protein localises to the cytoplasm. Functionally, may act as a negative regulator of salt tolerance. This Mycosarcoma maydis (Corn smut fungus) protein is Stress response protein NST1 (NST1).